We begin with the raw amino-acid sequence, 105 residues long: Fluoride-specific ion channel FluC (105 aa).

3 helical membrane passes run 14–34 (FPLPILTVNVLGSFLMGVFVV), 44–64 (LSPLVMTGLLGGFTTFSAFSL), and 79–99 (ALYVALSVGLSIAGLMAGLWL). Gly54 and Thr57 together coordinate Na(+).

Belongs to the fluoride channel Fluc/FEX (TC 1.A.43) family.

The protein localises to the cell inner membrane. The enzyme catalyses fluoride(in) = fluoride(out). Na(+) is not transported, but it plays an essential structural role and its presence is essential for fluoride channel function. Functionally, fluoride-specific ion channel. Important for reducing fluoride concentration in the cell, thus reducing its toxicity. In Jannaschia sp. (strain CCS1), this protein is Fluoride-specific ion channel FluC.